Reading from the N-terminus, the 381-residue chain is DNA replication and repair protein RecF (381 aa).

An ATP-binding site is contributed by 30–37; it reads GENAQGKT.

It belongs to the RecF family.

Its subcellular location is the cytoplasm. In terms of biological role, the RecF protein is involved in DNA metabolism; it is required for DNA replication and normal SOS inducibility. RecF binds preferentially to single-stranded, linear DNA. It also seems to bind ATP. This is DNA replication and repair protein RecF from Lactobacillus delbrueckii subsp. bulgaricus (strain ATCC 11842 / DSM 20081 / BCRC 10696 / JCM 1002 / NBRC 13953 / NCIMB 11778 / NCTC 12712 / WDCM 00102 / Lb 14).